Here is a 159-residue protein sequence, read N- to C-terminus: SsrA-binding protein (159 aa).

Positions 134-159 (KEHDKRDTERDRDWSRDKERLMKHNA) are disordered.

Belongs to the SmpB family.

Its subcellular location is the cytoplasm. In terms of biological role, required for rescue of stalled ribosomes mediated by trans-translation. Binds to transfer-messenger RNA (tmRNA), required for stable association of tmRNA with ribosomes. tmRNA and SmpB together mimic tRNA shape, replacing the anticodon stem-loop with SmpB. tmRNA is encoded by the ssrA gene; the 2 termini fold to resemble tRNA(Ala) and it encodes a 'tag peptide', a short internal open reading frame. During trans-translation Ala-aminoacylated tmRNA acts like a tRNA, entering the A-site of stalled ribosomes, displacing the stalled mRNA. The ribosome then switches to translate the ORF on the tmRNA; the nascent peptide is terminated with the 'tag peptide' encoded by the tmRNA and targeted for degradation. The ribosome is freed to recommence translation, which seems to be the essential function of trans-translation. The chain is SsrA-binding protein from Marinomonas sp. (strain MWYL1).